A 144-amino-acid chain; its full sequence is Large ribosomal subunit protein uL15 (144 aa).

The segment at 1–57 is disordered; that stretch reads MKLNDLSPAPGSRREKHRPGRGIGSGLGKTGGRGHKGQTSRSGGSIAPGFEGGQQPL. The span at 21-31 shows a compositional bias: gly residues; it reads RGIGSGLGKTG.

This sequence belongs to the universal ribosomal protein uL15 family. As to quaternary structure, part of the 50S ribosomal subunit.

Binds to the 23S rRNA. In Pseudomonas putida (strain ATCC 700007 / DSM 6899 / JCM 31910 / BCRC 17059 / LMG 24140 / F1), this protein is Large ribosomal subunit protein uL15.